The sequence spans 432 residues: Serine--tRNA ligase (432 aa).

Position 238–240 (238–240) interacts with L-serine; it reads TAE. 269 to 271 provides a ligand contact to ATP; the sequence is RSE. L-serine is bound at residue E292. 357-360 contributes to the ATP binding site; the sequence is EISS. S393 contributes to the L-serine binding site.

This sequence belongs to the class-II aminoacyl-tRNA synthetase family. Type-1 seryl-tRNA synthetase subfamily. In terms of assembly, homodimer. The tRNA molecule binds across the dimer.

It is found in the cytoplasm. It carries out the reaction tRNA(Ser) + L-serine + ATP = L-seryl-tRNA(Ser) + AMP + diphosphate + H(+). The enzyme catalyses tRNA(Sec) + L-serine + ATP = L-seryl-tRNA(Sec) + AMP + diphosphate + H(+). The protein operates within aminoacyl-tRNA biosynthesis; selenocysteinyl-tRNA(Sec) biosynthesis; L-seryl-tRNA(Sec) from L-serine and tRNA(Sec): step 1/1. Functionally, catalyzes the attachment of serine to tRNA(Ser). Is also able to aminoacylate tRNA(Sec) with serine, to form the misacylated tRNA L-seryl-tRNA(Sec), which will be further converted into selenocysteinyl-tRNA(Sec). The sequence is that of Serine--tRNA ligase from Hyphomonas neptunium (strain ATCC 15444).